The primary structure comprises 513 residues: MSLSLPPLIAVACLVVALARISWLPLRSWLRRRRRTHQLAAQLPGPRNLPLLGNFHMFFGLEPWQVPHLINQLAKKYDGTFKLKMGSNFSLMMFQPRDIEVVLGSSQLLDKAVEYSFLRGWLNDGLLLSGGRKWHRRRKIITPAFHFRILESYDEIFDRQTRLLIHKWQQTLGHSFDLGHDVHLFTLDVICETAMGVSTNAQTNADSDYVRAVKTISTVLHKRMFNIFYRFDLTYMLTPLAWAERRALNVLHKFTEKIIVQRREELLRGGVTQTTDGADVGAKSKMVFLDILLQSNIDDKPLTNLDIREEVDTFMFEGHDTTSSGITFFFYNIALYPECQRKCVEEIVSVLGKDTETPVTYDLLNNLNYMDLCIKETLRMYPSVPLLGRKVLQECEINGKIIPAGTNIGISPLFLGRSEDISSEPNTFKPERFDVVTSAEKLNPHAYIPFSAGPRNCIGQKFAMLEIKAIAANVLRHYEIEFVGNAEESPVLIAELILRTKDPLMFKLKKRVI.

The heme site is built by E317 and C457.

Belongs to the cytochrome P450 family. Heme is required as a cofactor.

It is found in the endoplasmic reticulum membrane. Its subcellular location is the microsome membrane. Functionally, may play an important role in the maintenance of specific insect-host plant relationships. May be involved in xenobiotic metabolism. In Drosophila mettleri (Fruit fly), this protein is Cytochrome P450 4d10 (Cyp4d10).